The following is a 93-amino-acid chain: Parbolysin P4 (93 aa).

Cystine bridges form between C16–C37, C22–C33, and C47–C60.

The protein belongs to the worm cytolysin family. In terms of tissue distribution, localized within the skin and proboscis and are most readily isolated from body mucus secretions.

It is found in the secreted. Functionally, cytolysin that shows hemolytic activity (on bovine erythrocytes, HC(50)=5.75 mg/ml). This hemolytic activity is completely inhibited by small unilamelar vesicles composed of PC/PG, PC/PI and PC/PS in 1:1 molar ratios (with at least 100 mg/ml concentration). This is Parbolysin P4 from Parborlasia corrugatus (Antarctic nemertean worm).